The sequence spans 35 residues: Conotoxin Cl6.16 (35 aa).

3 disulfides stabilise this stretch: C10–C22, C16–C27, and C21–C34.

In terms of tissue distribution, expressed by the venom duct.

It is found in the secreted. The polypeptide is Conotoxin Cl6.16 (Californiconus californicus (California cone)).